A 132-amino-acid chain; its full sequence is S-protein homolog 15 (132 aa).

The first 20 residues, 1–20 (MSRLIFFILVTAIYFVGNEA), serve as a signal peptide directing secretion.

Belongs to the plant self-incompatibility (S1) protein family.

The protein localises to the secreted. In Arabidopsis thaliana (Mouse-ear cress), this protein is S-protein homolog 15.